Here is a 341-residue protein sequence, read N- to C-terminus: HTH-type transcriptional repressor PurR (341 aa).

Positions 2 to 56 (ATIKDVAKRAGVSTTTVSHVINKTRFVAEETKAAVRAAIKELHYSPSAVARSLKV) constitute an HTH lacI-type domain. Residues 4–23 (IKDVAKRAGVSTTTVSHVIN) constitute a DNA-binding region (H-T-H motif). Residues 48 to 56 (SAVARSLKV) mediate DNA binding. Y73, R190, T192, F221, and D275 together coordinate hypoxanthine.

Homodimer.

Its pathway is purine metabolism; purine nucleotide biosynthesis [regulation]. Functionally, is the main repressor of the genes involved in the de novo synthesis of purine nucleotides, regulating purB, purC, purEK, purF, purHD, purL, purMN and guaBA expression. PurR is allosterically activated to bind its cognate DNA by binding the purine corepressors, hypoxanthine or guanine, thereby effecting transcription repression. The protein is HTH-type transcriptional repressor PurR of Pectobacterium atrosepticum (strain SCRI 1043 / ATCC BAA-672) (Erwinia carotovora subsp. atroseptica).